Reading from the N-terminus, the 279-residue chain is Shikimate dehydrogenase (NADP(+)) (279 aa).

Residues 14-16 (SLS) and threonine 62 contribute to the shikimate site. The active-site Proton acceptor is lysine 66. Residues asparagine 87 and aspartate 103 each coordinate shikimate. NADP(+)-binding positions include 127–131 (GAGGA), 151–156 (NRTKAK), and methionine 215. Position 217 (tyrosine 217) interacts with shikimate. An NADP(+)-binding site is contributed by glycine 239.

The protein belongs to the shikimate dehydrogenase family. In terms of assembly, homodimer.

The enzyme catalyses shikimate + NADP(+) = 3-dehydroshikimate + NADPH + H(+). Its pathway is metabolic intermediate biosynthesis; chorismate biosynthesis; chorismate from D-erythrose 4-phosphate and phosphoenolpyruvate: step 4/7. Its function is as follows. Involved in the biosynthesis of the chorismate, which leads to the biosynthesis of aromatic amino acids. Catalyzes the reversible NADPH linked reduction of 3-dehydroshikimate (DHSA) to yield shikimate (SA). The sequence is that of Shikimate dehydrogenase (NADP(+)) from Alteromonas mediterranea (strain DSM 17117 / CIP 110805 / LMG 28347 / Deep ecotype).